Here is a 380-residue protein sequence, read N- to C-terminus: Serpin B7 (380 aa).

Residues Ser-217 and Ser-223 each carry the phosphoserine modification.

This sequence belongs to the serpin family. Ov-serpin subfamily. In terms of tissue distribution, predominantly expressed in mesangial cells. Expressed in the epidermis of the whole body.

It localises to the cytoplasm. In terms of biological role, might function as an inhibitor of Lys-specific proteases. Might influence the maturation of megakaryocytes via its action as a serpin. The chain is Serpin B7 (SERPINB7) from Homo sapiens (Human).